The following is a 1026-amino-acid chain: Multidrug resistance protein MdtC (1026 aa).

The next 11 membrane-spanning stretches (helical) occupy residues 15-35 (ILIA…LPVA), 333-353 (EVEE…FLFL), 360-380 (LIPA…MYLC), 387-407 (LSLM…IVVL), 431-451 (VGFT…PLLL), 463-483 (FAVT…TLTP), 528-548 (LVGV…IAIP), 853-873 (LILI…LYES), 897-917 (LFNA…IGIV), 953-973 (PIMM…LSGG), and 984-1004 (ITIV…TPVV).

Belongs to the resistance-nodulation-cell division (RND) (TC 2.A.6) family. MdtC subfamily. Part of a tripartite efflux system composed of MdtA, MdtB and MdtC. MdtC forms a heteromultimer with MdtB.

It is found in the cell inner membrane. The protein is Multidrug resistance protein MdtC of Salmonella paratyphi C (strain RKS4594).